Reading from the N-terminus, the 274-residue chain is Putative pyruvate, phosphate dikinase regulatory protein (274 aa).

153 to 160 lines the ADP pocket; it reads GISRTSKT.

This sequence belongs to the pyruvate, phosphate/water dikinase regulatory protein family. PDRP subfamily.

It catalyses the reaction N(tele)-phospho-L-histidyl/L-threonyl-[pyruvate, phosphate dikinase] + ADP = N(tele)-phospho-L-histidyl/O-phospho-L-threonyl-[pyruvate, phosphate dikinase] + AMP + H(+). The enzyme catalyses N(tele)-phospho-L-histidyl/O-phospho-L-threonyl-[pyruvate, phosphate dikinase] + phosphate + H(+) = N(tele)-phospho-L-histidyl/L-threonyl-[pyruvate, phosphate dikinase] + diphosphate. Bifunctional serine/threonine kinase and phosphorylase involved in the regulation of the pyruvate, phosphate dikinase (PPDK) by catalyzing its phosphorylation/dephosphorylation. The chain is Putative pyruvate, phosphate dikinase regulatory protein from Bartonella tribocorum (strain CIP 105476 / IBS 506).